A 958-amino-acid polypeptide reads, in one-letter code: Collagen alpha-1(I) chain (958 aa).

The segment at 1–958 is disordered; that stretch reads GPMGPSGPRG…PGPPGPPGPP (958 aa). A compositionally biased stretch (basic and acidic residues) spans 50–64; sequence NGDDGEAGKPGRPGE. Ser-92 is modified (phosphoserine). Low complexity-rich tracts occupy residues 100-116 and 139-152; these read DAGPAGPKGEPGSPGEN and PAGARGNDGATGAA. Residues 154-166 show a composition bias toward pro residues; sequence PPGPTGPAGPPGF. Residues 216 to 232 are compositionally biased toward low complexity; the sequence is APGIAGAPGFPGARGPS. Over residues 294–303 the composition is skewed to gly residues; sequence GERGGPGSRG. Low complexity-rich tracts occupy residues 304–335, 347–373, 382–401, 557–571, 584–614, 640–656, 685–694, and 704–728; these read FPGSDGVAGPKGPAGERGAPGPAGPKGSPGEA, KGITGSPGSPGPDGKTGPPGPAGQDGR, ARGQAGVMGFPGPKGAAGEP, SGPSGPAGPTGARGA, AGFAGPPGADGQPGAKGEPGDAGAKGDAGPA, SAGPPGATGFPGAAGRV, ETGPAGRPGE, and AGEKGSPGADGPAGAPGTPGPQGIA. Residue Ser-560 is modified to Phosphoserine. Composition is skewed to pro residues over residues 769–779 and 808–823; these read PPGPVGPPGIA and AGPPGAPGAPGAPGPV. Residues 859-873 are compositionally biased toward basic and acidic residues; that stretch reads RGDKGETGEQGDRGI. Residues 892–925 are compositionally biased toward low complexity; that stretch reads PGEQGPSGASGPAGPRGPPGSAGAPGKDGINGIP. Residues 943–958 show a composition bias toward pro residues; that stretch reads VGPPGPPGPPGPPGPP.

The protein belongs to the fibrillar collagen family. In terms of assembly, trimers of one alpha 2(I) and two alpha 1(I) chains. In terms of processing, prolines at the third position of the tripeptide repeating unit (G-X-Y) are hydroxylated in some or all of the chains. As to expression, forms the fibrils of tendon, ligaments and bones. In bones, the fibrils are mineralized with calcium hydroxyapatite.

Its subcellular location is the secreted. The protein resides in the extracellular space. The protein localises to the extracellular matrix. Type I collagen is a member of group I collagen (fibrillar forming collagen). The polypeptide is Collagen alpha-1(I) chain (Macrauchenia sp).